The chain runs to 478 residues: Cytochrome P450 monooxygenase asqL (478 aa).

A heme-binding site is contributed by Cys407.

The protein belongs to the cytochrome P450 family. It depends on heme as a cofactor.

It participates in secondary metabolite biosynthesis. The protein operates within alkaloid biosynthesis. Its pathway is mycotoxin biosynthesis. In terms of biological role, cytochrome P450 monooxygenase; part of the gene cluster that mediates the biosynthesis of the aspoquinolone mycotoxins. The role of asqL within the aspoquinolone pathway has still to be determined. The first step of the pathway is catalyzed by the nonribosomal peptide synthetase asqK that condenses anthranilic acid and O-methyl-L-tyrosine to produce 4'-methoxycyclopeptin. 4'-methoxycyclopeptin is then converted to 4'-methoxydehydrocyclopeptin by the ketoglutarate-dependent dioxygenase asqJ. AsqJ also converts its first product 4'-methoxydehydrocyclopeptin to 4'-methoxycyclopenin. The following conversion of 4'-methoxycyclopenin into 4'-methoxyviridicatin is catalyzed by the cyclopenase asqI. 4'-methoxyviridicatin is the precursor of quinolone natural products, and is further converted to quinolinone B. The prenyltransferase asqH1 then catalyzes the canonical Friedel-Crafts alkylation of quinolinone B with dimethylallyl cation to yield dimethylallyl quinolone, which is subjected to FAD-dependent dehydrogenation by the FAD-linked oxidoreductase asqF to yield conjugated aryl diene. The delta(3') double bond then serves as the site of the second alkylation with DMAPP catalyzed by the prenyltransferase asqH2 to yield a carbenium ion intermediate, which can be attacked by H(2)O to yield a styrenyl quinolone containing a C3'-hydroxyprenyl chain. The FAD-dependent monooxygenase asqG performs epoxidation of the terminal C7'-C8' olefin. Finally, after dehydratation of the epoxide at C3 by asqC, the quinolone epoxide rearrangement protein asqO catalyzes an enzymatic 3-exo-tet cyclization to yield the cyclopropyl-THF ring system in aspoquinolone. This is Cytochrome P450 monooxygenase asqL from Emericella nidulans (strain FGSC A4 / ATCC 38163 / CBS 112.46 / NRRL 194 / M139) (Aspergillus nidulans).